Here is a 544-residue protein sequence, read N- to C-terminus: Chaperonin GroEL (544 aa).

ATP-binding positions include 29–32 (TLGP), 86–90 (DGTTT), G413, 476–478 (NAA), and D492.

This sequence belongs to the chaperonin (HSP60) family. Forms a cylinder of 14 subunits composed of two heptameric rings stacked back-to-back. Interacts with the co-chaperonin GroES.

It localises to the cytoplasm. The catalysed reaction is ATP + H2O + a folded polypeptide = ADP + phosphate + an unfolded polypeptide.. Its function is as follows. Together with its co-chaperonin GroES, plays an essential role in assisting protein folding. The GroEL-GroES system forms a nano-cage that allows encapsulation of the non-native substrate proteins and provides a physical environment optimized to promote and accelerate protein folding. The chain is Chaperonin GroEL from Bacillus mycoides (strain KBAB4) (Bacillus weihenstephanensis).